Here is a 255-residue protein sequence, read N- to C-terminus: Proliferating cell nuclear antigen 2 (255 aa).

A DNA-binding region spans residues 61-80 (HCDRNVSLGLDLKSLGKVLK).

The protein belongs to the PCNA family. In terms of assembly, homotrimer. Interacts with the catalytic subunits of two DNA polymerase complexes: PolD1 in the delta complex and PolE1/DNApol-epsilon255 in the epsilon complex.

It localises to the nucleus. The protein resides in the chromosome. Its subcellular location is the cytoplasm. Likely to be an auxiliary protein of DNA polymerase delta complex and is probably involved in the control of DNA replication and repair by increasing the polymerase's processibility. May function independently of PCNA during DNA repair. In Drosophila melanogaster (Fruit fly), this protein is Proliferating cell nuclear antigen 2.